The chain runs to 143 residues: Heat shock protein 16 (143 aa).

The region spanning 30 to 143 (QIPGELSPSI…SQTKKQIAIK (114 aa)) is the sHSP domain.

Belongs to the small heat shock protein (HSP20) family.

The protein resides in the cytoplasm. The protein localises to the nucleus. The sequence is that of Heat shock protein 16 (hsp16) from Schizosaccharomyces pombe (strain 972 / ATCC 24843) (Fission yeast).